The sequence spans 399 residues: Succinate--CoA ligase [ADP-forming] subunit beta (399 aa).

In terms of domain architecture, ATP-grasp spans 9–254 (KAVLQPFGVS…TTEEDAKEIE (246 aa)). Residues K46, 53–55 (GRG), E109, S112, and E117 each bind ATP. 2 residues coordinate Mg(2+): N209 and D223. Substrate contacts are provided by residues N274 and 331–333 (GIM).

This sequence belongs to the succinate/malate CoA ligase beta subunit family. In terms of assembly, heterotetramer of two alpha and two beta subunits. Requires Mg(2+) as cofactor.

It catalyses the reaction succinate + ATP + CoA = succinyl-CoA + ADP + phosphate. It carries out the reaction GTP + succinate + CoA = succinyl-CoA + GDP + phosphate. It participates in carbohydrate metabolism; tricarboxylic acid cycle; succinate from succinyl-CoA (ligase route): step 1/1. Functionally, succinyl-CoA synthetase functions in the citric acid cycle (TCA), coupling the hydrolysis of succinyl-CoA to the synthesis of either ATP or GTP and thus represents the only step of substrate-level phosphorylation in the TCA. The beta subunit provides nucleotide specificity of the enzyme and binds the substrate succinate, while the binding sites for coenzyme A and phosphate are found in the alpha subunit. This chain is Succinate--CoA ligase [ADP-forming] subunit beta, found in Rhodopseudomonas palustris (strain BisA53).